We begin with the raw amino-acid sequence, 364 residues long: Tubulin alpha-2 chain (364 aa).

The GTP site is built by Gly59, Thr60, Thr94, Asn121, and Asn144. The active site involves Glu170.

Belongs to the tubulin family. In terms of assembly, dimer of alpha and beta chains. A typical microtubule is a hollow water-filled tube with an outer diameter of 25 nm and an inner diameter of 15 nM. Alpha-beta heterodimers associate head-to-tail to form protofilaments running lengthwise along the microtubule wall with the beta-tubulin subunit facing the microtubule plus end conferring a structural polarity. Microtubules usually have 13 protofilaments but different protofilament numbers can be found in some organisms and specialized cells. Mg(2+) serves as cofactor. Post-translationally, undergoes a tyrosination/detyrosination cycle, the cyclic removal and re-addition of a C-terminal tyrosine residue by the enzymes tubulin tyrosine carboxypeptidase (TTCP) and tubulin tyrosine ligase (TTL), respectively.

Its subcellular location is the cytoplasm. It is found in the cytoskeleton. The catalysed reaction is GTP + H2O = GDP + phosphate + H(+). Tubulin is the major constituent of microtubules, a cylinder consisting of laterally associated linear protofilaments composed of alpha- and beta-tubulin heterodimers. Microtubules grow by the addition of GTP-tubulin dimers to the microtubule end, where a stabilizing cap forms. Below the cap, tubulin dimers are in GDP-bound state, owing to GTPase activity of alpha-tubulin. In Anemia phyllitidis (Fern), this protein is Tubulin alpha-2 chain (TUBA2).